The chain runs to 342 residues: Anthranilate phosphoribosyltransferase (342 aa).

Residues Gly83, 86-87 (GD), Thr91, 93-96 (NVST), 111-119 (KHGNRSVSG), and Ser123 contribute to the 5-phospho-alpha-D-ribose 1-diphosphate site. Gly83 contributes to the anthranilate binding site. Ser95 provides a ligand contact to Mg(2+). Asn114 lines the anthranilate pocket. Residue Arg169 coordinates anthranilate. Mg(2+) contacts are provided by Asp228 and Glu229.

This sequence belongs to the anthranilate phosphoribosyltransferase family. In terms of assembly, homodimer. Mg(2+) serves as cofactor.

The enzyme catalyses N-(5-phospho-beta-D-ribosyl)anthranilate + diphosphate = 5-phospho-alpha-D-ribose 1-diphosphate + anthranilate. It functions in the pathway amino-acid biosynthesis; L-tryptophan biosynthesis; L-tryptophan from chorismate: step 2/5. In terms of biological role, catalyzes the transfer of the phosphoribosyl group of 5-phosphorylribose-1-pyrophosphate (PRPP) to anthranilate to yield N-(5'-phosphoribosyl)-anthranilate (PRA). The chain is Anthranilate phosphoribosyltransferase from Halorhodospira halophila (strain DSM 244 / SL1) (Ectothiorhodospira halophila (strain DSM 244 / SL1)).